Reading from the N-terminus, the 1215-residue chain is Endoplasmic reticulum transmembrane helix translocase (1215 aa).

Topologically, residues 1-27 (MTKKSFVSSPIVRDSTLLVPKSLIAKP) are cytoplasmic. The chain crosses the membrane as a helical span at residues 28-43 (YVLPFFPLYATFAQLY). At 44 to 56 (FQQYDRYIKGPEW) the chain is on the lumenal side. Residues 57-76 (TFVYLGTLVSLNILVMLMPA) traverse the membrane as a helical segment. Topologically, residues 77 to 188 (WNVKIKAKFN…ENSFDIPIPT (112 aa)) are cytoplasmic. Residues 156 to 185 (KIGDFQKCKGHSGDLTHLKRLYGENSFDIP) form an A-domain; part 1 region. A helical membrane pass occupies residues 189–216 (FMELFKEHAVAPLFVFQVFCVALWLLDE). Residue phenylalanine 217 is a topological domain, lumenal. Residues 218 to 246 (WYYSLFNLFMIISMEAAAVFQRLTALKEF) form a helical membrane-spanning segment. The Cytoplasmic portion of the chain corresponds to 247 to 395 (RTMGIKPYTI…IYSAERVSVD (149 aa)). The A-domain; part 2 stretch occupies residues 250-390 (GIKPYTINVF…LVRVMIYSAE (141 aa)). Serine 324 is modified (phosphoserine). A helical membrane pass occupies residues 396–425 (NKEALMFILFLLIFAVIASWYVWVEGTKMG). The Lumenal segment spans residues 426–427 (RI). 2 consecutive transmembrane segments (helical) span residues 428–442 (QSKLILDCILIITSV) and 446–464 (ELPMELTMAVNSSLAALAK). Topologically, residues 465 to 971 (FYVYCTEPFR…APFTSKLANV (507 aa)) are cytoplasmic. Residues 466 to 495 (YVYCTEPFRIPFAGRIDVCCFDKTGTLTGE) are P-domain; part 1. Residue aspartate 487 is the 4-aspartylphosphate intermediate of the active site. Mg(2+)-binding residues include aspartate 487 and threonine 489. ATP is bound by residues 487 to 489 (DKT), phenylalanine 582, arginine 634, aspartate 699, and 816 to 820 (DGTND). The segment at 497-674 (LVFEGLAGIS…FNGFLIFHCP (178 aa)) is N-domain. The P-domain; part 2 stretch occupies residues 677–837 (DDAIETIKML…HVGIALLNGT (161 aa)). A Mg(2+)-binding site is contributed by aspartate 816. The interval 838–953 (EEGLKKLGEQ…DAQGDEAPAL (116 aa)) is arm-like. The residue at position 936 (serine 936) is a Phosphoserine. Residues 954–969 (KLGDASCAAPFTSKLA) are P-domain; part 3. The chain crosses the membrane as a helical span at residues 972-1011 (SAVTNIIRQGRCALVNTIQMYKILALNCLISAYSLSIIYM). Topologically, residues 1012 to 1017 (AGVKFG) are lumenal. The chain crosses the membrane as a helical span at residues 1018-1035 (DGQATVSGLLLSVCFLSI). Residues 1036–1055 (SRGKPLEKLSKQRPQSGIFN) are Cytoplasmic-facing. Residues 1056–1084 (VYIMGSILSQFAVHIATLVYITTEIYKLE) form a helical membrane-spanning segment. Residues 1085–1099 (PREPQVDLEKEFAPS) lie on the Lumenal side of the membrane. The chain crosses the membrane as a helical span at residues 1100–1121 (LLNTGIFIIQLVQQVSTFAVNY). At 1122–1133 (QGEPFRENIRSN) the chain is on the cytoplasmic side. Residues 1134–1151 (KGMYYGLLGVTGLALASA) traverse the membrane as a helical segment. At 1152 to 1168 (TEFLPELNEAMKFVPMT) the chain is on the lumenal side. The chain crosses the membrane as a helical span at residues 1169-1197 (DDFKIKLTLTLLLDFFGSWGVEHFFKFFF). Over 1198-1215 (MDDKPSDISVQQVKIASK) the chain is Cytoplasmic.

The protein belongs to the cation transport ATPase (P-type) (TC 3.A.3) family. Type V subfamily. The cofactor is Mg(2+).

It localises to the endoplasmic reticulum membrane. The catalysed reaction is [protein]-with a C-terminal TM segment(out) + ATP + H2O = [protein]-with a C-terminal TM segment(in) + ADP + phosphate + H(+). With respect to regulation, the ATPase activity is stimulated by phosphatidylinositol 4-phosphate (PI4P). Endoplasmic reticulum translocase required to remove mitochondrial transmembrane proteins mistargeted to the endoplasmic reticulum. Acts as a dislocase that mediates the ATP-dependent extraction of mislocalized mitochondrial transmembrane proteins from the endoplasmic reticulum membrane. Specifically binds mitochondrial tail-anchored transmembrane proteins: has an atypically large substrate-binding pocket that recognizes and binds moderately hydrophobic transmembranes with short hydrophilic lumenal domains. The protein is Endoplasmic reticulum transmembrane helix translocase of Saccharomyces cerevisiae (strain ATCC 204508 / S288c) (Baker's yeast).